Reading from the N-terminus, the 221-residue chain is Uracil-DNA glycosylase 1 (221 aa).

D61 functions as the Proton acceptor in the catalytic mechanism.

Belongs to the uracil-DNA glycosylase (UDG) superfamily. UNG family.

Its subcellular location is the cytoplasm. The enzyme catalyses Hydrolyzes single-stranded DNA or mismatched double-stranded DNA and polynucleotides, releasing free uracil.. In terms of biological role, excises uracil residues from the DNA which can arise as a result of misincorporation of dUMP residues by DNA polymerase or due to deamination of cytosine. The protein is Uracil-DNA glycosylase 1 of Listeria innocua serovar 6a (strain ATCC BAA-680 / CLIP 11262).